Here is a 907-residue protein sequence, read N- to C-terminus: Protein translocase subunit SecA (907 aa).

ATP is bound by residues Gln-87, 105–109, and Asp-513; that span reads GEGKT. Positions 841–853 are enriched in basic and acidic residues; the sequence is EAQRRAQAEEAAR. A disordered region spans residues 841-907; that stretch reads EAQRRAQAEE…KYKQCHGQIN (67 aa). Low complexity predominate over residues 854–865; that stretch reads RAQAQHASAQSQ. The segment covering 872-887 has biased composition (basic and acidic residues); the sequence is EGHHQPVVRDERKVGR. Cys-891, Cys-893, Cys-902, and His-903 together coordinate Zn(2+).

It belongs to the SecA family. In terms of assembly, monomer and homodimer. Part of the essential Sec protein translocation apparatus which comprises SecA, SecYEG and auxiliary proteins SecDF-YajC and YidC. Zn(2+) serves as cofactor.

It localises to the cell inner membrane. The protein resides in the cytoplasm. It catalyses the reaction ATP + H2O + cellular proteinSide 1 = ADP + phosphate + cellular proteinSide 2.. Functionally, part of the Sec protein translocase complex. Interacts with the SecYEG preprotein conducting channel. Has a central role in coupling the hydrolysis of ATP to the transfer of proteins into and across the cell membrane, serving both as a receptor for the preprotein-SecB complex and as an ATP-driven molecular motor driving the stepwise translocation of polypeptide chains across the membrane. The polypeptide is Protein translocase subunit SecA (Vibrio vulnificus (strain YJ016)).